The following is a 105-amino-acid chain: Large ribosomal subunit protein eL36 (105 aa).

At Lys62 the chain carries N6-acetyllysine.

This sequence belongs to the eukaryotic ribosomal protein eL36 family. In terms of assembly, component of the large ribosomal subunit.

The protein localises to the cytoplasm. Its subcellular location is the cytosol. In terms of biological role, component of the large ribosomal subunit. The ribosome is a large ribonucleoprotein complex responsible for the synthesis of proteins in the cell. In Homo sapiens (Human), this protein is Large ribosomal subunit protein eL36 (RPL36).